We begin with the raw amino-acid sequence, 95 residues long: NADH-quinone oxidoreductase subunit 11 (95 aa).

3 helical membrane passes run 1–21 (MSYLLTSALLFALGVYGVLTR), 25–45 (ILVFLSIELMLNAANLSLVGF), and 59–79 (MVIAVAAAEVAVGLGLIVAIF).

It belongs to the complex I subunit 4L family. As to quaternary structure, NDH-1 is composed of 15 different subunits, Nqo1 to Nqo15. The complex has a L-shaped structure, with the hydrophobic arm (subunits Nqo7, Nqo8 and Nqo10 to Nqo14) embedded in the membrane and the hydrophilic peripheral arm (subunits Nqo1 to Nqo6, Nqo9 and Nqo15) protruding into the bacterial cytoplasm. The hydrophilic domain contains all the redox centers.

It is found in the cell inner membrane. The catalysed reaction is a quinone + NADH + 5 H(+)(in) = a quinol + NAD(+) + 4 H(+)(out). Its function is as follows. NDH-1 shuttles electrons from NADH, via FMN and iron-sulfur (Fe-S) centers, to quinones in the respiratory chain. The immediate electron acceptor for the enzyme in this species is menaquinone. Couples the redox reaction to proton translocation (for every two electrons transferred, four hydrogen ions are translocated across the cytoplasmic membrane), and thus conserves the redox energy in a proton gradient required for the synthesis of ATP. The chain is NADH-quinone oxidoreductase subunit 11 (nqo11) from Thermus thermophilus (strain ATCC 27634 / DSM 579 / HB8).